A 545-amino-acid polypeptide reads, in one-letter code: Methionine--tRNA ligase (545 aa).

The 'HIGH' region signature appears at 15–25 (PYANGPIHIGH). Zn(2+) contacts are provided by cysteine 146, cysteine 149, cysteine 159, and cysteine 162. The 'KMSKS' region motif lies at 332–336 (KLSKS). An ATP-binding site is contributed by lysine 335.

This sequence belongs to the class-I aminoacyl-tRNA synthetase family. MetG type 1 subfamily. Monomer. Zn(2+) is required as a cofactor.

The protein localises to the cytoplasm. The catalysed reaction is tRNA(Met) + L-methionine + ATP = L-methionyl-tRNA(Met) + AMP + diphosphate. In terms of biological role, is required not only for elongation of protein synthesis but also for the initiation of all mRNA translation through initiator tRNA(fMet) aminoacylation. The chain is Methionine--tRNA ligase (metG) from Buchnera aphidicola subsp. Schizaphis graminum (strain Sg).